A 428-amino-acid chain; its full sequence is GTPase HflX (428 aa).

Residues 214 to 374 (PVVAIVGYTN…AIERELFKET (161 aa)) form the Hflx-type G domain. Residues 220-227 (GYTNAGKS), 245-249 (FATLD), 267-270 (DTVG), 333-336 (NKID), and 352-354 (SAK) contribute to the GTP site. Positions 227 and 247 each coordinate Mg(2+).

It belongs to the TRAFAC class OBG-HflX-like GTPase superfamily. HflX GTPase family. In terms of assembly, monomer. Associates with the 50S ribosomal subunit. Requires Mg(2+) as cofactor.

It is found in the cytoplasm. GTPase that associates with the 50S ribosomal subunit and may have a role during protein synthesis or ribosome biogenesis. The polypeptide is GTPase HflX (Caldanaerobacter subterraneus subsp. tengcongensis (strain DSM 15242 / JCM 11007 / NBRC 100824 / MB4) (Thermoanaerobacter tengcongensis)).